Reading from the N-terminus, the 251-residue chain is Azurocidin (251 aa).

The first 19 residues, 1–19 (MTRLTVLALLAGLLASSRA), serve as a signal peptide directing secretion. Positions 20-26 (GSSPLLD) are cleaved as a propeptide — removed in mature form. Residues 25 to 26 (LD) constitute a propeptide, dipeptide found in non-mature form. Residues 27 to 244 (IVGGRKARPR…FRDWIDGVLN (218 aa)) form the Peptidase S1 domain. Positions 46–70 (NQGRHFCGGALIHARFVMTAASCFQ) are possesses antibiotic activity. A disulfide bridge connects residues C52 and C68. An N-linked (GlcNAc...) asparagine; partial glycan is attached at N126. The N-linked (GlcNAc...) asparagine glycan is linked to N140. Cystine bridges form between C149-C207, C180-C186, and C197-C222. An N-linked (GlcNAc...) asparagine; partial glycan is attached at N171. Positions 249–251 (GPA) are cleaved as a propeptide — removed in mature form.

The protein belongs to the peptidase S1 family. Elastase subfamily. Post-translationally, cleavage of the N-terminal propeptide which is composed of 7 amino acids occurs in two steps. The initial cleavage of 5 amino acids is followed by the cleavage of a dipeptide to produce the mature form.

The protein resides in the cytoplasmic granule membrane. In terms of biological role, this is a neutrophil granule-derived antibacterial and monocyte- and fibroblast-specific chemotactic glycoprotein. Binds heparin. The cytotoxic action is limited to many species of Gram-negative bacteria; this specificity may be explained by a strong affinity of the very basic N-terminal half for the negatively charged lipopolysaccharides that are unique to the Gram-negative bacterial outer envelope. It may play a role in mediating recruitment of monocytes in the second wave of inflammation. Has antibacterial activity against the Gram-negative bacterium P.aeruginosa, this activity is inhibited by LPS from P.aeruginosa. Acting alone, it does not have antimicrobial activity against the Gram-negative bacteria A.actinomycetemcomitans ATCC 29532, A.actinomycetemcomitans NCTC 9709, A.actinomycetemcomitans FDC-Y4, H.aphrophilus ATCC 13252, E.corrodens ATCC 23834, C.sputigena ATCC 33123, Capnocytophaga sp ATCC 33124, Capnocytophaga sp ATCC 27872 or E.coli ML-35. Has antibacterial activity against C.sputigena ATCC 33123 when acting synergistically with either elastase or cathepsin G. The chain is Azurocidin from Homo sapiens (Human).